A 253-amino-acid polypeptide reads, in one-letter code: 5'-nucleotidase SurE (253 aa).

Positions 8, 9, 39, and 92 each coordinate a divalent metal cation.

It belongs to the SurE nucleotidase family. It depends on a divalent metal cation as a cofactor.

Its subcellular location is the cytoplasm. It catalyses the reaction a ribonucleoside 5'-phosphate + H2O = a ribonucleoside + phosphate. Its function is as follows. Nucleotidase that shows phosphatase activity on nucleoside 5'-monophosphates. In Burkholderia mallei (strain NCTC 10247), this protein is 5'-nucleotidase SurE.